The primary structure comprises 189 residues: MELCHSNQLKIGLKIIYNNEPCIVVSNEFIKPGKGQAFFRVRLKNLLNKKLIDKTCKYSDCFKIANVIEITATYMFTDKKVWTFMDKKSFEQIFVEKNIIKNVLPWLLEQHDYIISLWNDQPISIVYSSNFIELIVVNTIPNARSGAINTYSKLALLNTGVTIKVPIFIQIGQIIKVDTRTSEYISKIS.

Lys34 bears the N6-(3,6-diaminohexanoyl)-5-hydroxylysine mark.

This sequence belongs to the elongation factor P family. May be beta-lysylated on the epsilon-amino group of Lys-34 by the combined action of EpmA and EpmB, and then hydroxylated on the C5 position of the same residue by EpmC (if this protein is present). Lysylation is critical for the stimulatory effect of EF-P on peptide-bond formation. The lysylation moiety may extend toward the peptidyltransferase center and stabilize the terminal 3-CCA end of the tRNA. Hydroxylation of the C5 position on Lys-34 may allow additional potential stabilizing hydrogen-bond interactions with the P-tRNA.

It is found in the cytoplasm. It functions in the pathway protein biosynthesis; polypeptide chain elongation. In terms of biological role, involved in peptide bond synthesis. Alleviates ribosome stalling that occurs when 3 or more consecutive Pro residues or the sequence PPG is present in a protein, possibly by augmenting the peptidyl transferase activity of the ribosome. Modification of Lys-34 is required for alleviation. The chain is Elongation factor P from Buchnera aphidicola subsp. Baizongia pistaciae (strain Bp).